Here is a 169-residue protein sequence, read N- to C-terminus: MNTTVKRIDPASLNLKEQVVAINRVTKVVKGGKNLSFSALVVIGDPSAKVVGYGVGKAKEVPSAIRKGIEAAKKNLRRINSLDTTIPHQVLGVFASSQVLLKPASPGTGVIAGGAVRAVITACGVPNVLTKSIGRRNPHNVVKATIVALEMLRDRNTVAEMRGLAVEKL.

Residues 15–79 enclose the S5 DRBM domain; it reads LKEQVVAINR…EAAKKNLRRI (65 aa).

It belongs to the universal ribosomal protein uS5 family. Part of the 30S ribosomal subunit. Contacts proteins S4 and S8.

Functionally, with S4 and S12 plays an important role in translational accuracy. Located at the back of the 30S subunit body where it stabilizes the conformation of the head with respect to the body. The polypeptide is Small ribosomal subunit protein uS5 (Solibacter usitatus (strain Ellin6076)).